The sequence spans 377 residues: Queuine tRNA-ribosyltransferase (377 aa).

Catalysis depends on D94, which acts as the Proton acceptor. Residues 94–98, D148, Q191, and G218 each bind substrate; that span reads DSGGF. Positions 249–255 are RNA binding; sequence GVGTPDD. D268 serves as the catalytic Nucleophile. Residues 273-277 are RNA binding; important for wobble base 34 recognition; sequence TRAGR.

Belongs to the queuine tRNA-ribosyltransferase family. As to quaternary structure, homodimer. Within each dimer, one monomer is responsible for RNA recognition and catalysis, while the other monomer binds to the replacement base PreQ1.

It catalyses the reaction 7-aminomethyl-7-carbaguanine + guanosine(34) in tRNA = 7-aminomethyl-7-carbaguanosine(34) in tRNA + guanine. It participates in tRNA modification; tRNA-queuosine biosynthesis. Its function is as follows. Catalyzes the base-exchange of a guanine (G) residue with the queuine precursor 7-aminomethyl-7-deazaguanine (PreQ1) at position 34 (anticodon wobble position) in tRNAs with GU(N) anticodons (tRNA-Asp, -Asn, -His and -Tyr). Catalysis occurs through a double-displacement mechanism. The nucleophile active site attacks the C1' of nucleotide 34 to detach the guanine base from the RNA, forming a covalent enzyme-RNA intermediate. The proton acceptor active site deprotonates the incoming PreQ1, allowing a nucleophilic attack on the C1' of the ribose to form the product. After dissociation, two additional enzymatic reactions on the tRNA convert PreQ1 to queuine (Q), resulting in the hypermodified nucleoside queuosine (7-(((4,5-cis-dihydroxy-2-cyclopenten-1-yl)amino)methyl)-7-deazaguanosine). This chain is Queuine tRNA-ribosyltransferase, found in Brucella melitensis biotype 1 (strain ATCC 23456 / CCUG 17765 / NCTC 10094 / 16M).